The sequence spans 414 residues: MSQNKLKTLIEELKKRKVFNNITSEEKVDLITLDHGIYVGFDPTAISLHLGNYIQMVNLKRFQNVGFKTIAILGGATSMIGDPSFKDSERKLLSNETILENKKHIRKQLENFGFKVIDNLDFYKDMNILDYLRSVGKFFNVSTMMSRDSVANRIQSGLSFTEFSYQTLQAYDFKVLCEKENVMMQLGGSDQWGNLVSGLDFINKTLSKNLPTIGITMNLLVDSNGNKIGKSTGGASLWIDKTLTSPYVLYQYLLNTNDDDAYNLLLQLTFLQLSEIERIKNEHLKNPKLRLMQSRLSFEVVKDIHGKEEAQRALHISTSLFKEKNSWFNLSLEDLIQLKGSVDFVPFKDDLFLTLVDSKIISSKREFNEFVRDKSLKINGQDVTGLDYDLPWENYDNKYLILKKGKKQYWVIYK.

Tyr-38 contributes to the L-tyrosine binding site. The 'HIGH' region signature appears at 43–52; that stretch reads PTAISLHLGN. L-tyrosine-binding residues include Tyr-165 and Gln-169. Positions 227-231 match the 'KMSKS' region motif; it reads KIGKS. Lys-230 is an ATP binding site. An S4 RNA-binding domain is found at 349 to 413; sequence DDLFLTLVDS…KGKKQYWVIY (65 aa).

The protein belongs to the class-I aminoacyl-tRNA synthetase family. TyrS type 1 subfamily. Homodimer.

The protein localises to the cytoplasm. The catalysed reaction is tRNA(Tyr) + L-tyrosine + ATP = L-tyrosyl-tRNA(Tyr) + AMP + diphosphate + H(+). Functionally, catalyzes the attachment of tyrosine to tRNA(Tyr) in a two-step reaction: tyrosine is first activated by ATP to form Tyr-AMP and then transferred to the acceptor end of tRNA(Tyr). The protein is Tyrosine--tRNA ligase of Mycoplasmopsis pulmonis (strain UAB CTIP) (Mycoplasma pulmonis).